The chain runs to 208 residues: CASP-like protein 2U9 (208 aa).

Topologically, residues 1–27 (MGVADAPSPGNVPVLGDMKNRSAAEMK) are cytoplasmic. Residues 28–48 (ISVLALRALTLVLLVIALALM) form a helical membrane-spanning segment. At 49–87 (VSNKQTQSIPIKLPGMASTIFLKKTATFSQITGVQYYVG) the chain is on the extracellular side. Residues 88 to 108 (ALSVAVAYMFFQMLAGLFTIL) form a helical membrane-spanning segment. Residues 109–120 (TTGSIVGSKSRA) are Cytoplasmic-facing. The helical transmembrane segment at 121-141 (WVTFILDQLIAYLMVSAATVV) threads the bilayer. The Extracellular segment spans residues 142–168 (AEVGYIARRGETKVGWNQVCSDFKHYC). A helical membrane pass occupies residues 169–189 (FIYGFSLVNAFLATIAFLPVV). Residues 190–208 (AVSAFHLFRMYGAQSAQSK) are Cytoplasmic-facing.

The protein belongs to the Casparian strip membrane proteins (CASP) family. As to quaternary structure, homodimer and heterodimers.

It is found in the cell membrane. In Selaginella moellendorffii (Spikemoss), this protein is CASP-like protein 2U9.